The primary structure comprises 399 residues: MAREKFERNKPHVNIGTIGHVDHGKTTLTAAITNVLAKKGQAQAQDYGDIDGAPEERERGITINTAHVEYETEGRHYAHVDCPGHADYVKNMITGAAQMDGAILVCAATDGPMAQTKEHILLAKQVGVPALVVALNKCDMVDDEEIIELVEMEIRELLDSYDFPGDDIPIVQVSGLKALEGDTTWESKIEELMKAVDASIPEPEREVDKPFLMAVEDVFSITGRGTVATGRIERGKVKVGEEVEIVGIRDTRVTTVTGVEMFRKLLDEGMAGDNVGLLLRGVQKEDIERGMVLVKKGSITPHTQFEGEVYVLKKEEGGRHTPFFAGYRPQFYIRTTDVTGQITAFTSDDGSNVEMVMPGDRIKMTGELICPVAIEQGMRFAIREGGRTIGAGVVSKILK.

In terms of domain architecture, tr-type G spans 10–204 (KPHVNIGTIG…AVDASIPEPE (195 aa)). Positions 19–26 (GHVDHGKT) are G1. Position 19–26 (19–26 (GHVDHGKT)) interacts with GTP. Threonine 26 provides a ligand contact to Mg(2+). A G2 region spans residues 60–64 (GITIN). The G3 stretch occupies residues 81–84 (DCPG). Residues 81 to 85 (DCPGH) and 136 to 139 (NKCD) contribute to the GTP site. Positions 136–139 (NKCD) are G4. Residues 174–176 (SGL) are G5.

Belongs to the TRAFAC class translation factor GTPase superfamily. Classic translation factor GTPase family. EF-Tu/EF-1A subfamily. Monomer.

Its subcellular location is the cytoplasm. The catalysed reaction is GTP + H2O = GDP + phosphate + H(+). Functionally, GTP hydrolase that promotes the GTP-dependent binding of aminoacyl-tRNA to the A-site of ribosomes during protein biosynthesis. The polypeptide is Elongation factor Tu (Prochlorococcus marinus (strain AS9601)).